Consider the following 427-residue polypeptide: Dihydroorotase (427 aa).

Residues H58 and H60 each contribute to the Zn(2+) site. Substrate contacts are provided by residues 60-62 and N92; that span reads HYR. Zn(2+) is bound by residues D150, H177, and H230. N276 is a substrate binding site. A Zn(2+)-binding site is contributed by D303. D303 is a catalytic residue. Residues H307 and 321-322 contribute to the substrate site; that span reads FG.

This sequence belongs to the metallo-dependent hydrolases superfamily. DHOase family. Class I DHOase subfamily. Requires Zn(2+) as cofactor.

The catalysed reaction is (S)-dihydroorotate + H2O = N-carbamoyl-L-aspartate + H(+). The protein operates within pyrimidine metabolism; UMP biosynthesis via de novo pathway; (S)-dihydroorotate from bicarbonate: step 3/3. Functionally, catalyzes the reversible cyclization of carbamoyl aspartate to dihydroorotate. This Lactobacillus leichmannii protein is Dihydroorotase.